Reading from the N-terminus, the 514-residue chain is Cytochrome P450 monooxygenase FUS8 (514 aa).

A helical transmembrane segment spans residues 24–44 (VFENLTVTNTVCAFIALFIIV). N-linked (GlcNAc...) asparagine glycosylation is found at Asn225 and Asn443. Position 460 (Cys460) interacts with heme.

Belongs to the cytochrome P450 family. Heme is required as a cofactor.

The protein localises to the membrane. It participates in mycotoxin biosynthesis. Cytochrome P450 monooxygenase; part of the gene cluster that mediates the biosynthesis of the mycotoxin fusarin C. Within the cluster, FUS1, FUS2, FUS8 and FUS9 are sufficient for fusarin production. The roles of the other FUS members are yet undetermined. The fusarin C synthetase FUS1 is responsible for the condensation of one acetyl-coenzyme A (CoA) unit with six malonyl-CoA units and the amide linkage of the arising heptaketide and homoserine, subsequently releasing the first intermediate, prefusarin, as an alcohol with an open ring structure. The cytochrome P450 monooxygenase FUS8 participates in multiple oxidation processes at carbon C-20 and is able to use the FUS1 product as substrate, resulting in formation of 20-hydroxy-prefusarin. This reaction seems to be essential before the 2-pyrrolidone ring closure can be catalyzed by FUS2, generating 20-hydroxy-fusarin. FUS8 is able to further oxidizes carbon C-20 after ring closure, resulting in the formation of carboxy-fusarin C. As the last step, FUS9 methylates the hydroxyl group at C-21 to generate fusarin C. Fusarin C can then rearrange to epi-fusarin C, the (z)-isomers, and fusarin A and fusarin D. This is Cytochrome P450 monooxygenase FUS8 from Gibberella fujikuroi (strain CBS 195.34 / IMI 58289 / NRRL A-6831) (Bakanae and foot rot disease fungus).